A 319-amino-acid polypeptide reads, in one-letter code: Ribonuclease Z (319 aa).

7 residues coordinate Zn(2+): His-62, His-64, Asp-66, His-67, His-139, Asp-209, and His-268. Residue Asp-66 is the Proton acceptor of the active site.

It belongs to the RNase Z family. As to quaternary structure, homodimer. Requires Zn(2+) as cofactor.

It catalyses the reaction Endonucleolytic cleavage of RNA, removing extra 3' nucleotides from tRNA precursor, generating 3' termini of tRNAs. A 3'-hydroxy group is left at the tRNA terminus and a 5'-phosphoryl group is left at the trailer molecule.. Its function is as follows. Zinc phosphodiesterase, which displays some tRNA 3'-processing endonuclease activity. Probably involved in tRNA maturation, by removing a 3'-trailer from precursor tRNA. In Pseudomonas putida (strain ATCC 47054 / DSM 6125 / CFBP 8728 / NCIMB 11950 / KT2440), this protein is Ribonuclease Z.